The following is a 97-amino-acid chain: UPF0235 protein AZOSEA09540 (97 aa).

This sequence belongs to the UPF0235 family.

The protein is UPF0235 protein AZOSEA09540 of Aromatoleum aromaticum (strain DSM 19018 / LMG 30748 / EbN1) (Azoarcus sp. (strain EbN1)).